The chain runs to 368 residues: MRTLHVDLGERSYPIYIGENLLGDARWFAPHIVGRRVAVISNETVAPLYLETLLKALQGHEVTPVVLPDGEAYKQWETLQLIFDALLKERHDRKTTLIALGGGVIGDMAGFAAACYQRGVNFIQVPTTLLSQVDSSVGGKTGINHPLGKNMIGAFYQPQAVVIDTASLKTLPSRELSAGLAEVIKYGFICDEPFITWLEEHMDALLALEPTVVTEAIERSCAAKARVVGADERESGVRATLNLGHTFGHAIETQQGYGVWLHGEAVGAGTVMALEMSHRLGWLSAAERDRGIRLLRRAGLPVVPPAEMTAEDFMEHMAVDKKVLDGRLRLVLLQGLGNAVVTGDFPREILDATLRTDYRALADQLGDE.

NAD(+)-binding positions include 69–74, 103–107, 127–128, lysine 140, and lysine 149; these read DGEAYK, GVIGD, and TT. Zn(2+)-binding residues include glutamate 182, histidine 245, and histidine 262.

This sequence belongs to the sugar phosphate cyclases superfamily. Dehydroquinate synthase family. It depends on Co(2+) as a cofactor. Requires Zn(2+) as cofactor. NAD(+) is required as a cofactor.

It is found in the cytoplasm. It carries out the reaction 7-phospho-2-dehydro-3-deoxy-D-arabino-heptonate = 3-dehydroquinate + phosphate. The protein operates within metabolic intermediate biosynthesis; chorismate biosynthesis; chorismate from D-erythrose 4-phosphate and phosphoenolpyruvate: step 2/7. In terms of biological role, catalyzes the conversion of 3-deoxy-D-arabino-heptulosonate 7-phosphate (DAHP) to dehydroquinate (DHQ). The sequence is that of 3-dehydroquinate synthase from Pseudomonas aeruginosa (strain UCBPP-PA14).